Here is a 635-residue protein sequence, read N- to C-terminus: MNNQGRSILTWAALFVFVILLFNVFQSDGLLGGRNNITFSDFLTRVDEKTVNSVKIQGRVIEGTSNDGSTFNTYAPDYPDLVNRLTSNDVNIEVVPLETRMNTFLGFLISWFPMLLLIGVWVFFMRQMHGGGKAMGFGKSKARLLSDKGPKITFKDVAGIDEAKEELTEIVDFLRDPSKFQKLGGKIPKGCLLIGPPGTGKTLLAKAIAGEANVPFFSISGSDFVEMFVGVGASRVRDMFEQGKRNAPCIIFIDEIDAVGRHRGIGMGGGNDEREQTLNQMLVEMDGFEANEGVVIIAATNRPDVLDRALLRPGRFDRQIAVANPDINGREQILKVHLKKIKYNSTVLARIIARGTPGFSGAELANLVNEAALIAARLGKKEVDMHDMEEAKDKVLMGVARRSIAMSEKEKRLTAYHEGGHALVGLYCPAASPLHKATIIPRGNALGMVQRLPETDEYSQNREQMESSIAVYMAGRVAEEIIFGRNKVTSGASSDIKGATNIARAMVTKAGLSDLIGPIFHGSSSDDMYGRQPSNETSEATAELIDAEVKKIITQGYEFAKDILTKHIDQLHTLANALIEYETLSGQQIKNLLSGRALDSEEENKFPFNDSPTIKIDKEKSPEKAKKAKKESTNI.

The Cytoplasmic segment spans residues 1 to 6 (MNNQGR). The helical transmembrane segment at 7 to 27 (SILTWAALFVFVILLFNVFQS) threads the bilayer. Residues 28–103 (DGLLGGRNNI…VVPLETRMNT (76 aa)) are Periplasmic-facing. The helical transmembrane segment at 104 to 124 (FLGFLISWFPMLLLIGVWVFF) threads the bilayer. The Cytoplasmic portion of the chain corresponds to 125-635 (MRQMHGGGKA…KKAKKESTNI (511 aa)). An ATP-binding site is contributed by 195–202 (GPPGTGKT). H417 lines the Zn(2+) pocket. The active site involves E418. 2 residues coordinate Zn(2+): H421 and D495. A disordered region spans residues 600-635 (SEEENKFPFNDSPTIKIDKEKSPEKAKKAKKESTNI). Residues 615–635 (KIDKEKSPEKAKKAKKESTNI) show a composition bias toward basic and acidic residues.

In the central section; belongs to the AAA ATPase family. It in the C-terminal section; belongs to the peptidase M41 family. Homohexamer. It depends on Zn(2+) as a cofactor.

It is found in the cell inner membrane. Its function is as follows. Acts as a processive, ATP-dependent zinc metallopeptidase for both cytoplasmic and membrane proteins. Plays a role in the quality control of integral membrane proteins. This chain is ATP-dependent zinc metalloprotease FtsH, found in Rickettsia felis (strain ATCC VR-1525 / URRWXCal2) (Rickettsia azadi).